A 433-amino-acid chain; its full sequence is MEDRQALEEAGEEMGFPVVNISGGGRGRRGNYSNDGSGARELSLRVNEEVTEPPYNSITYAEVLRLYRQNGFSFFLSNLHFEQIKYFEHREGEGDLGAIIREHGKIVLDPNVVYHLRRPLKIQSLCYIVGRGAVIKVHASVGQQAVHVYRQLDISPRIMGMLNVTFLECKFHWADDEGVNFERLARHFTLFFLTYESVFFACDFVGFPGLTLRSTCLLRVEGCTFTSCAVGIHHADVADLKVKACYFNHCSVCIFADGPADVLRNCATNCDCFVIMEQEGSVVGNSVVYKLPPSRADDLMICQQGYMYPLSSIHIVRNLSCEYPKLKNNVFSHVDMHVGLRQGLQHFNQCNLSFVYCMLETESVPKVSFYSSYIQTLTVAQIVQFSREHSRECQCFCGGRHRLLFPSVVHITPTVVPDRTRFTVDVEELSDDE.

It belongs to the adenoviridae E1B 55 kDa protein family. In terms of assembly, interacts with host PML-4 and PML-5; this interaction promotes efficient subnuclear targeting of E1B-55K to PML nuclear bodies. Interacts with E4-ORF3 protein. Interacts with E4-ORF6 protein.

Its subcellular location is the host nucleus. It is found in the host cytoplasm. In terms of biological role, plays a major role to prevent cellular inhibition of viral genome replication. Assembles an SCF-like E3 ubiquitin ligase complex based on the cellular proteins ELOB, ELOC, CUL5 and RBX1, in cooperation with viral E4orf6. This viral RING-type ligase ubiquitinates cellular substrates and targets them to proteasomal degradation: TP53/p53, LIG4, MRE11-RAD50-NBS1 (MRN) complex, ITGA3, DAXX and BLM. E1B-55K probably acts as the substrate-specific adapter of the SCF-like E3 ubiquitin ligase complex. Degradation of host TP53/p53 activity is essential for preventing E1A-induced TP53 accumulation that would otherwise lead to cell apoptosis and growth arrest. E1B-55K also inactivates TP53 transcription-factor activity by binding its transactivation domain. E1B-55K also functions as a SUMO1 E3 ligase for TP53 which causes the latter to be sequestered in promyelocytic leukemia (PML) nuclear bodies thereby contributing to maximal inhibition of TP53 function. This chain is E1B 55 kDa protein, found in Murine adenovirus A serotype 1 (MAdV-1).